The sequence spans 325 residues: tRNA N6-adenosine threonylcarbamoyltransferase (325 aa).

Positions 111 and 115 each coordinate Fe cation. Substrate-binding positions include 134 to 138 (LISGG), aspartate 167, glycine 180, and asparagine 277. Position 305 (aspartate 305) interacts with Fe cation.

This sequence belongs to the KAE1 / TsaD family. Fe(2+) serves as cofactor.

It is found in the cytoplasm. Its subcellular location is the secreted. It catalyses the reaction L-threonylcarbamoyladenylate + adenosine(37) in tRNA = N(6)-L-threonylcarbamoyladenosine(37) in tRNA + AMP + H(+). In terms of biological role, required for the formation of a threonylcarbamoyl group on adenosine at position 37 (t(6)A37) in tRNAs that read codons beginning with adenine. Is involved in the transfer of the threonylcarbamoyl moiety of threonylcarbamoyl-AMP (TC-AMP) to the N6 group of A37, together with TsaE and TsaB. TsaD likely plays a direct catalytic role in this reaction. This Mannheimia haemolytica (Pasteurella haemolytica) protein is tRNA N6-adenosine threonylcarbamoyltransferase.